A 113-amino-acid polypeptide reads, in one-letter code: MEARAVAKYIRISPRKARQVIDLIRGKDVEEALAILRYTPKKASYFIEKVLRSAIANAENNHDMSKENLYVAKAYVDQGPTLKRYNPRAQGRVDLWRVRTSHITIVVAERKEG.

The protein belongs to the universal ribosomal protein uL22 family. As to quaternary structure, part of the 50S ribosomal subunit.

Functionally, this protein binds specifically to 23S rRNA; its binding is stimulated by other ribosomal proteins, e.g. L4, L17, and L20. It is important during the early stages of 50S assembly. It makes multiple contacts with different domains of the 23S rRNA in the assembled 50S subunit and ribosome. The globular domain of the protein is located near the polypeptide exit tunnel on the outside of the subunit, while an extended beta-hairpin is found that lines the wall of the exit tunnel in the center of the 70S ribosome. This is Large ribosomal subunit protein uL22 from Carboxydothermus hydrogenoformans (strain ATCC BAA-161 / DSM 6008 / Z-2901).